The sequence spans 2493 residues: Polyprotein P1234 (2493 aa).

Positions Glu28 to His259 constitute an Alphavirus-like MT domain. The interval Gly244 to Val263 is nsP1 membrane-binding. Cys419 carries the S-palmitoyl cysteine; by host lipid modification. Residues Glu690–Lys841 form the (+)RNA virus helicase ATP-binding domain. Gly721–Ser728 serves as a coordination point for a ribonucleoside 5'-triphosphate. Residues Ser842–Ala990 form the (+)RNA virus helicase C-terminal domain. Residues Asp1003 to Ser1322 form the Peptidase C9 domain. Residues Val1004–Thr1023 form a nucleolus localization signal region. Cys1012 (for cysteine protease nsP2 activity) is an active-site residue. Positions Val1056 to Ser1065 match the Nuclear export signal motif. The For cysteine protease nsP2 activity role is filled by His1081. Residues Pro1179–Val1183 carry the Nuclear localization signal motif. The region spanning Ala1330–Glu1489 is the Macro domain. The ADP-D-ribose site is built by Asp1339, Asn1353, Gly1361, Gly1441, Ile1442, and Phe1443. Zn(2+)-binding residues include Cys1596, Cys1598, Cys1621, and Cys1639. 2 disordered regions span residues Pro1664–Gln1684 and Ala1790–Pro1826. The segment covering Arg1814–Ser1823 has biased composition (polar residues). 2 consecutive repeat copies span residues Arg1818–Ala1839 and Arg1852–Ala1873. The tract at residues Arg1818–Ala1873 is 2 X 21 AA approximate repeats, binding to host FXR family members. Residues Asp2250–Ala2365 form the RdRp catalytic domain.

As to quaternary structure, interacts with non-structural protein 3. Interacts with RNA-directed RNA polymerase nsP4. Interacts with protease nsP2. interacts with itself. Interacts with mRNA-capping enzyme nsP1. Interacts with host DDX1. Interacts with host DDX3. Interacts (via C-terminus) with host FXR1; this interaction inhibits the formation of host stress granules on viral mRNAs and the nsp3-FXR1 complexes bind viral RNAs and probably orchestrate the assembly of viral replication complexes. Interacts (via C-terminus) with host FXR2; this interaction inhibits the formation of host stress granules on viral mRNAs and the nsp3-FXR2 complexes bind viral RNAs and probably orchestrate the assembly of viral replication complexes. Interacts (via C-terminus) with host FMR1; this interaction inhibits the formation of host stress granules on viral mRNAs and the nsp3-FMR1 complexes bind viral RNAs and probably orchestrate the assembly of viral replication complexes. In terms of assembly, interacts with mRNA-capping enzyme nsP1. Interacts with protease nsP2. interacts with itself. As to quaternary structure, interacts with RNA-directed RNA polymerase nsP4. Interacts with mRNA-capping enzyme nsP1. Interacts with KPNA1/karyopherin-alpha1; this interaction probably allows the active transport of protease nsP2 into the host nucleus. The cofactor is Mg(2+). Mn(2+) is required as a cofactor. In terms of processing, specific enzymatic cleavages in vivo yield mature proteins. The processing of the polyprotein is temporally regulated. In early stages (1.7 hpi), P1234 is first cleaved in trans through its nsP2 protease activity, releasing P123' and nsP4, which associate to form the early replication complex. At the same time, P1234 is also cut at the nsP1/nsP2 site early in infection but with lower efficiency. After replication of the viral minus-strand RNAs (4 hpi), the polyproteins are cut at the nsP1/nsP2 and nsP2/nsP3 sites very efficiently, preventing accumulation of P123' and P1234 and allowing the formation of the late replication complex. NsP3'/nsP4 site is not cleaved anymore and P34 is produced rather than nsP4. Specific enzymatic cleavages in vivo yield mature proteins. The processing of the polyprotein is temporally regulated. In early stages (1.7 hpi), P123 is cleaved at the nsP1/nsP2 site with low efficiency. After replication of the viral minus-strand RNAs (4 hpi), the polyproteins are cut at the nsP1/nsP2 and nsP2/nsP3 sites very efficiently, preventing accumulation of P123 and allowing the formation of the late replication complex. Post-translationally, specific enzymatic cleavages in vivo yield mature proteins. The processing of the polyprotein is temporally regulated. In early stages (1.7 hpi), P123' is cleaved at the nsP1/nsP2 site with low efficiency. After replication of the viral minus-strand RNAs (4 hpi), the polyproteins are cut at the nsP1/nsP2 and nsP2/nsP3 sites very efficiently, preventing accumulation of P123' and allowing the formation of the late replication complex. In terms of processing, palmitoylated by host palmitoyltransferases ZDHHC2 and ZDHHC19. Phosphorylated by host on serines and threonines. Post-translationally, ubiquitinated; targets the protein for rapid degradation via the ubiquitin system. Nsp4 is present in extremely low quantities due to low frequency of translation through the amber stop-codon and the degradation by the ubiquitin pathway.

It localises to the host cytoplasmic vesicle membrane. It is found in the host cell membrane. The protein resides in the host cell projection. Its subcellular location is the host filopodium. The protein localises to the host nucleus. It localises to the host cytoplasm. The catalysed reaction is GTP + S-adenosyl-L-methionine = N(7)-methyl-GTP + S-adenosyl-L-homocysteine. It catalyses the reaction N(7)-methyl-GTP + L-histidyl-[protein] = N(tele)-(N(7)-methylguanosine 5'-phospho)-L-histidyl-[protein] + diphosphate. It carries out the reaction N(tele)-(N(7)-methylguanosine 5'-phospho)-L-histidyl-[protein] + a 5'-end diphospho-(purine-ribonucleoside) in mRNA + H(+) = a 5'-end (N(7)-methyl 5'-triphosphoguanosine)-(purine-ribonucleoside) in mRNA + L-histidyl-[protein]. The enzyme catalyses a 5'-end triphospho-ribonucleoside in mRNA + H2O = a 5'-end diphospho-ribonucleoside in mRNA + phosphate + H(+). The catalysed reaction is a ribonucleoside 5'-triphosphate + H2O = a ribonucleoside 5'-diphosphate + phosphate + H(+). It catalyses the reaction ATP + H2O = ADP + phosphate + H(+). It carries out the reaction RNA(n) + a ribonucleoside 5'-triphosphate = RNA(n+1) + diphosphate. The enzyme catalyses 4-O-(ADP-D-ribosyl)-L-aspartyl-[protein] + H2O = L-aspartyl-[protein] + ADP-D-ribose + H(+). The catalysed reaction is 5-O-(ADP-D-ribosyl)-L-glutamyl-[protein] + H2O = L-glutamyl-[protein] + ADP-D-ribose + H(+). It catalyses the reaction RNA(n) + ATP = RNA(n)-3'-adenine ribonucleotide + diphosphate. It carries out the reaction ADP-alpha-D-ribose 1''-phosphate + H2O = ADP-D-ribose + phosphate. Its activity is regulated as follows. Inhibited by sinefungin. In terms of biological role, inactive precursor of the viral replicase, which is activated by cleavages carried out by the viral protease nsP2. Its function is as follows. The early replication complex formed by the polyprotein P123 and nsP4 synthesizes the minus-strand RNAs (antigenome). Polyprotein P123 is a short-lived polyprotein that accumulates during early stage of infection. As soon P123 is cleaved into mature proteins, the plus-strand RNAs synthesis begins. The early replication complex formed by the polyprotein P123' and nsP4 synthesizes minus-strand RNAs (antigenome). Polyprotein P123' is a short-lived polyprotein that accumulates during early stage of infection. As soon P123' is cleaved into mature proteins, the plus-strand RNAs synthesis begins. Functionally, cytoplasmic capping enzyme that catalyzes two virus-specific reactions: methyltransferase and nsP1 guanylyltransferase. mRNA-capping is necessary since all viral RNAs are synthesized in the cytoplasm, and host capping enzymes are restricted to the nucleus. The enzymatic reaction involves a covalent link between 7-methyl-GMP and nsP1, whereas eukaryotic capping enzymes form a covalent complex only with GMP. NsP1 capping consists in the following reactions: GTP is first methylated into 7-methyl-GMP and then is covalently linked to nsP1 to form the m7GMp-nsP1 complex from which 7-methyl-GMP complex is transferred to the mRNA to create the cap structure. NsP1 is also needed for the initiation of the minus-strand RNAs synthesis. Probably serves as a membrane anchor for the replication complex composed of nsP1-nsP4. Nsp1 is needed for the initiation of the minus-strand RNAs synthesis. Palmitoylated nsP1 is remodeling host cell cytoskeleton, and induces filopodium-like structure formation at the surface of the host cell. In terms of biological role, multifunctional protein whose N-terminus is part of the RNA polymerase complex and displays NTPase, RNA triphosphatase and helicase activities. NTPase and RNA triphosphatase are involved in viral RNA capping and helicase keeps a check on the dsRNA replication intermediates. The C-terminus harbors a protease that specifically cleaves the polyproteins and releases the mature proteins. Required for the shutoff of minus-strand RNAs synthesis. Inhibits host translation to ensure maximal viral gene expression and evade host immune response. Its function is as follows. Seems to be essential for minus-strand RNAs and subgenomic 26S mRNAs synthesis. Displays mono-ADP-ribosylhydrolase activity. ADP-ribosylation is a post-translational modification that controls various processes of the host cell and the virus probably needs to revert it for optimal viral replication. Binds proteins of FXR family and sequesters them into the viral RNA replication complexes thereby inhibiting the formation of host stress granules on viral mRNAs. The nsp3-FXR complexes bind viral RNAs and probably orchestrate the assembly of viral replication complexes, thanks to the ability of FXR family members to self-assemble and bind DNA. Seems to be essential for minus-strand RNAs and subgenomic 26S mRNAs synthesis. Displays mono-ADP-ribosylhydrolase activity. ADP-ribosylation is a post-translational modification that controls various processes of the host cell and the virus probably needs to revert it for optimal viral replication. Binds proteins of FXR family and sequesters them into the viral RNA replication complexes thereby inhibiting the formation of host stress granules on viral mRNAs. The nsp3'-FXR complexes bind viral RNAs and probably orchestrate the assembly of viral replication complexes, thanks to the ability of FXR family members to self-assemble and bind DNA. Functionally, RNA dependent RNA polymerase. Replicates genomic and antigenomic RNA by recognizing replications specific signals. The early replication complex formed by the polyprotein P123 and nsP4 synthesizes minus-strand RNAs. The late replication complex composed of fully processed nsP1-nsP4 is responsible for the production of genomic and subgenomic plus-strand RNAs. In Bos taurus (Bovine), this protein is Polyprotein P1234.